A 355-amino-acid polypeptide reads, in one-letter code: UDP-3-O-acylglucosamine N-acyltransferase (355 aa).

Catalysis depends on H258, which acts as the Proton acceptor.

The protein belongs to the transferase hexapeptide repeat family. LpxD subfamily. As to quaternary structure, homotrimer.

It carries out the reaction a UDP-3-O-[(3R)-3-hydroxyacyl]-alpha-D-glucosamine + a (3R)-hydroxyacyl-[ACP] = a UDP-2-N,3-O-bis[(3R)-3-hydroxyacyl]-alpha-D-glucosamine + holo-[ACP] + H(+). It functions in the pathway bacterial outer membrane biogenesis; LPS lipid A biosynthesis. Catalyzes the N-acylation of UDP-3-O-acylglucosamine using 3-hydroxyacyl-ACP as the acyl donor. Is involved in the biosynthesis of lipid A, a phosphorylated glycolipid that anchors the lipopolysaccharide to the outer membrane of the cell. The chain is UDP-3-O-acylglucosamine N-acyltransferase from Bradyrhizobium sp. (strain BTAi1 / ATCC BAA-1182).